The sequence spans 536 residues: Coilin (536 aa).

The tract at residues 96–316 (AETCNDGAQN…QHSQSPTSDS (221 aa)) is disordered. The span at 171–180 (KTHKGKRTKK) shows a compositional bias: basic residues. A compositionally biased stretch (basic and acidic residues) spans 181 to 192 (KSEAPIENPPDK). A compositionally biased stretch (low complexity) spans 213–238 (QTSSSDSSDTSSCSDQPTPTTQQKPQ). Composition is skewed to polar residues over residues 239–257 (SSAK…THSV) and 303–316 (THIQ…TSDS). Tandem repeats lie at residues 353–358 (RGRGRG) and 380–385 (RGRGRG). Positions 353-385 (RGRGRGEDFSWRGQRGRWFRGQGNNSNRGRGRG) are 2 X 6 AA repeats of R-G-R-G-R-G. Residues 368 to 387 (GRWFRGQGNNSNRGRGRGDS) are disordered. The segment covering 371-380 (FRGQGNNSNR) has biased composition (low complexity). The Tudor; atypical domain maps to 425 to 523 (DYSSLPLLAA…VMLNWNTLIE (99 aa)).

The protein belongs to the coilin family. As to expression, expressed in both oocytes and somatic cells.

Its subcellular location is the nucleus. The protein is Coilin (coil) of Xenopus laevis (African clawed frog).